We begin with the raw amino-acid sequence, 349 residues long: MIRGLRQIEPYVAGVQPAERKMIKLNTNENAYGASPKVREALANFDVDNLRKYSTLEQADLRAALANNLKVKPEQLMIANGSDDVLSIAFLAFFNNDEPVLFPDLTYGFYKVWADLYRVNYHEIPLAEDFTINTEDYLADNGGIILTNPNAPTGIYKPLNEIEKLLKANQDTVVIIDEAYISFGGQSALSLLNKYNNLVITRTFSKDAALAGLRVGYAIANEPLIAVMNAVKHSINPYSVDLLAERLATAAVEDWSYYQENAKKIQKTRAWFSEQLVKQGFDVLPSQANFVLTKPHDLATAKLFEELEARKIYVRYFPKVERIKDYLRISMGTQEEMEEVVKAIEEIRG.

Lysine 206 carries the N6-(pyridoxal phosphate)lysine modification.

Belongs to the class-II pyridoxal-phosphate-dependent aminotransferase family. Histidinol-phosphate aminotransferase subfamily. As to quaternary structure, homodimer. Requires pyridoxal 5'-phosphate as cofactor.

It catalyses the reaction L-histidinol phosphate + 2-oxoglutarate = 3-(imidazol-4-yl)-2-oxopropyl phosphate + L-glutamate. The protein operates within amino-acid biosynthesis; L-histidine biosynthesis; L-histidine from 5-phospho-alpha-D-ribose 1-diphosphate: step 7/9. The polypeptide is Histidinol-phosphate aminotransferase (Streptococcus mutans serotype c (strain ATCC 700610 / UA159)).